A 284-amino-acid chain; its full sequence is MVLMIVSGRSGSGKSVALRALEDMGFYCVDNLPVVLLPQLASALAASNISAAVSIDVRNMPESPEIFEQAMDNLPQAFAPQLLFLDADRNTLIRRYSDTRRLHPLSALNLSLESAIDEEDSLLEPLRSRADLVIDTSEMSVHELAEMLRTRMLGKRERELTMVFESFGYKHGIPIDADYVFDVRFLPNPHWDPKLRPMTGLDRPVAAFLDRHTEVHNFIYQTRSYLELWLPMLETNNRSYLTVAVGCTGGKHRSVYIAEQLADYFRSRGKNAQSRHRTLEKSKS.

8 to 15 serves as a coordination point for ATP; sequence GRSGSGKS. 56–59 contacts GTP; the sequence is DVRN. The tract at residues 266–284 is RNA-binding; sequence RSRGKNAQSRHRTLEKSKS.

The protein belongs to the RapZ-like family. RapZ subfamily. As to quaternary structure, homotrimer.

In terms of biological role, modulates the synthesis of GlmS, by affecting the processing and stability of the regulatory small RNA GlmZ. When glucosamine-6-phosphate (GlcN6P) concentrations are high in the cell, RapZ binds GlmZ and targets it to cleavage by RNase E. Consequently, GlmZ is inactivated and unable to activate GlmS synthesis. Under low GlcN6P concentrations, RapZ is sequestered and inactivated by an other regulatory small RNA, GlmY, preventing GlmZ degradation and leading to synthesis of GlmS. This Sodalis glossinidius (strain morsitans) protein is RNase adapter protein RapZ.